Here is a 94-residue protein sequence, read N- to C-terminus: CRISPR-associated endoribonuclease Cas2 1 (94 aa).

Mg(2+) is bound at residue D8.

It belongs to the CRISPR-associated endoribonuclease Cas2 protein family. As to quaternary structure, homodimer, forms a heterotetramer with a Cas1 homodimer. The cofactor is Mg(2+).

Its function is as follows. CRISPR (clustered regularly interspaced short palindromic repeat), is an adaptive immune system that provides protection against mobile genetic elements (viruses, transposable elements and conjugative plasmids). CRISPR clusters contain sequences complementary to antecedent mobile elements and target invading nucleic acids. CRISPR clusters are transcribed and processed into CRISPR RNA (crRNA). Involved in the integration of spacer DNA into the CRISPR cassette. Functions as a ssRNA-specific endoribonuclease. The sequence is that of CRISPR-associated endoribonuclease Cas2 1 (cas21) from Archaeoglobus fulgidus (strain ATCC 49558 / DSM 4304 / JCM 9628 / NBRC 100126 / VC-16).